A 402-amino-acid chain; its full sequence is CinA-like protein (402 aa).

The protein belongs to the CinA family.

This chain is CinA-like protein, found in Deinococcus deserti (strain DSM 17065 / CIP 109153 / LMG 22923 / VCD115).